The sequence spans 1413 residues: DNA-directed RNA polymerase subunit beta' (1413 aa).

Zn(2+) contacts are provided by Cys-70, Cys-72, Cys-85, and Cys-88. The Mg(2+) site is built by Asp-460, Asp-462, and Asp-464. Cys-819, Cys-893, Cys-900, and Cys-903 together coordinate Zn(2+).

Belongs to the RNA polymerase beta' chain family. As to quaternary structure, the RNAP catalytic core consists of 2 alpha, 1 beta, 1 beta' and 1 omega subunit. When a sigma factor is associated with the core the holoenzyme is formed, which can initiate transcription. It depends on Mg(2+) as a cofactor. The cofactor is Zn(2+).

It carries out the reaction RNA(n) + a ribonucleoside 5'-triphosphate = RNA(n+1) + diphosphate. Functionally, DNA-dependent RNA polymerase catalyzes the transcription of DNA into RNA using the four ribonucleoside triphosphates as substrates. This is DNA-directed RNA polymerase subunit beta' from Burkholderia vietnamiensis (strain G4 / LMG 22486) (Burkholderia cepacia (strain R1808)).